A 461-amino-acid polypeptide reads, in one-letter code: MSSFTKEEFDCHILDEGFTAKDILDQKINEVSSSDDKDAFYVADLGDILKKHLRWLKALPRVTPFYAVKCNDSRAIVSTLAATGTGFDCASKTEIQLVQGLGVPPERIIYANPCKQVSQIKYAASSGVQMMTFDSEIELMKVARAHPKAKLVLRIATDDSKAVCRLSVKFGATLKTSRLLLERAKELNIDVIGVSFHVGSGCTDPETFVQAVSDARCVFDMGTEVGFSMYLLDIGGGFPGSEDTKLKFEEITSVINPALDKYFPSDSGVRIIAEPGRYYVASAFTLAVNIIAKKTVWKEQPGSDDEDESNEQTFMYYVNDGVYGSFNCILYDHAHVKALLQKRPKPDEKYYSSSIWGPTCDGLDRIVERCNLPEMHVGDWMLFENMGAYTVAAASTFNGFQRPNIYYVMSRPMWQLMKRIQSHGFPPEVEEQDDGTLPMSCAQESGMDHHSAACASARINV.

Lys69 is subject to N6-(pyridoxal phosphate)lysine. Pyridoxal 5'-phosphate contacts are provided by residues Ser200, Gly237, and 274–277 (EPGR). Ser303 bears the Phosphoserine; by CK2 mark. 331–332 (YD) contacts substrate. Cys360 functions as the Proton donor; shared with dimeric partner in the catalytic mechanism. Cys360 carries the post-translational modification S-nitrosocysteine. Residue Asp361 coordinates substrate. Position 389 (Tyr389) interacts with pyridoxal 5'-phosphate.

It belongs to the Orn/Lys/Arg decarboxylase class-II family. Homodimer. Only the dimer is catalytically active, as the active sites are constructed of residues from both monomers. The cofactor is pyridoxal 5'-phosphate.

The enzyme catalyses L-ornithine + H(+) = putrescine + CO2. It participates in amine and polyamine biosynthesis; putrescine biosynthesis via L-ornithine pathway; putrescine from L-ornithine: step 1/1. Inhibited by antizymes (AZs) OAZ1, OAZ2 and OAZ3 in response to polyamine levels. AZs inhibit the assembly of the functional homodimer by binding to ODC monomers. Additionally, OAZ1 targets ODC monomers for ubiquitin-independent proteolytic destruction by the 26S proteasome. Functionally, catalyzes the first and rate-limiting step of polyamine biosynthesis that converts ornithine into putrescine, which is the precursor for the polyamines, spermidine and spermine. Polyamines are essential for cell proliferation and are implicated in cellular processes, ranging from DNA replication to apoptosis. The sequence is that of Ornithine decarboxylase (Odc1) from Mus pahari (Gairdner's shrew-mouse).